Here is a 1479-residue protein sequence, read N- to C-terminus: MPEEQPQQQQQPVREQPSNPDDVPWKKVWTINEMRDSAKDWNLSSDAGLLNYMQDFANKLIYKTKELEFQVDELVKDSKSIHVKVHNTFDQFLMLSNTQFIENRVYEDNSELNNEQNEQTDKPQQQEITEEILIPKFSKAILIGLEALEKANFVNAALEISEQSNSNNNNNDYQQQMNGSIAASSAEGGLVEGGEQAGTDAQPSANTEKKKEKLDHYLRYPLPHIIGSQQFHQDDFCGLFIEDSDSDSSDEEDEEDVDAEDGSDESSSESSSDDDDEKDEQQQSTLFLTDEQPKQQNFFFQDEDATSENNANKKVSESLFEDEDDIFGDKPVASKKSSNSYTSSLSDILGGDDEDDLFGGSKKKQQQQEDADGDEPTKKKDPFADELNNTLSSKNKGGDDDLFGGSSSTTTTSKPKKKSMFDDDLFGDSEETPAPKSSASRKVTFDDSLFGDDETALPTSKKDSTTTSSQPQQKKTLNDLFTDEDLTPATKKETKKSSSLSFLDGMDEDDLFGTPKPKSTTTSAAPTATTTKPPTPIPDSDASGSESTTGKSSPAPKKPVGGVKLFDFDAAGGDIFSGKKVGTGGKSSPSPAPKTESKASEDDFFSSDKKSTSATKKDAEIFGSEGGLLDVPEKKIKRHDPKKYVDSDVLGIDSISSDKNKPKVQDPFGVGAAGSNDDDSFDIPKANSKKEQETKPTKSTTTDDDLDIPKAPTTATTTTTTKPAVKKSTKSNFFDFEDTDSPLSSNKKSGGDDDLFSFDSSKTTTETKKQPITEEPKKKQDTTTTPSIDPFSGLDIKKPSEASISPASPVSTIESDPLFGDIKKPVAQKPKKTNFFDGDLTKDEPAKSEPTKVEPTKVEPTKAEPTKVEPAKVEPTKVESDKKESNPLGGGDEESVFGDFSIKKNPTTSSSTTATENKPAVKKSTKSNFFDFEDTDSPLSSNKKNDDDIFSSTTKKSTTTTTTTTSSKDFFGDLDTSSGNKKVEEKKSSDFDSFFSGSDDPLGITKPKSKTTTTPPLTSTTANIESDDPLSLGLPTFTNNNNNNNAKPPPPPSPLGEDVPSPLTSNNTKNRTKSIGSMFEAQQQLQQQQQEKNRSESPTSEKAEPTKKTSNISSLQNKLSLNPNMFLPGSKMPKKKKEESENEDDSSTNNDNDSSATDLSDSGRSSPSVTSPTLSGGRPRRNTVSSRNNNDSEESEPVKELTHATASRPKSGGRRPPTRKSGTSAPNRSESPTPTQKSDSESEKVRSSSPITTKPVVSEPTKKTISNTSFFDDIPSEKTSSGKSSPSPTIKSTSEKVTIDPLGDIFASTTTKPTASETKAALSSAPKKSEPETPKETPKETPKEKEQTKEKEQPKETPKTTTTKKSTKAVETKSETDSFFDDIPDIISRPKASVKSAAAKKASSTTKPVISDDIFDDITSTTSKSTTTTTTTTTTKAKSTKAVDNLFDDDTNTTTKATPTKATPSKSKPKAKNVENLFD.

The segment covering 1–17 (MPEEQPQQQQQPVREQP) has biased composition (low complexity). 5 disordered regions span residues 1-25 (MPEEQPQQQQQPVREQPSNPDDVPW), 188-210 (GGLVEGGEQAGTDAQPSANTEKK), 240-564 (FIED…GGVK), 576-1383 (FSGK…FDDI), and 1419-1479 (TSTT…NLFD). Acidic residues predominate over residues 242 to 279 (EDSDSDSSDEEDEEDVDAEDGSDESSSESSSDDDDEKD). The span at 334–349 (SKKSSNSYTSSLSDIL) shows a compositional bias: low complexity. Acidic residues predominate over residues 422–431 (DDDLFGDSEE). Low complexity-rich tracts occupy residues 465–475 (TTTSSQPQQKK) and 514–532 (TPKPKSTTTSAAPTATTTK). Position 535 is a phosphothreonine (Thr-535). The segment covering 542 to 552 (ASGSESTTGKS) has biased composition (polar residues). A compositionally biased stretch (basic and acidic residues) spans 595–620 (TESKASEDDFFSSDKKSTSATKKDAE). The span at 709 to 723 (PKAPTTATTTTTTKP) shows a compositional bias: low complexity. The span at 765-781 (TETKKQPITEEPKKKQD) shows a compositional bias: basic and acidic residues. The span at 802-814 (ASISPASPVSTIE) shows a compositional bias: polar residues. Residues 839-885 (DLTKDEPAKSEPTKVEPTKVEPTKAEPTKVEPAKVEPTKVESDKKES) are compositionally biased toward basic and acidic residues. Residues 904 to 916 (KNPTTSSSTTATE) are compositionally biased toward polar residues. Low complexity predominate over residues 951–968 (SSTTKKSTTTTTTTTSSK). The span at 981–990 (KKVEEKKSSD) shows a compositional bias: basic and acidic residues. Low complexity-rich tracts occupy residues 991–1000 (FDSFFSGSDD) and 1010–1021 (KTTTTPPLTSTT). A compositionally biased stretch (polar residues) spans 1062–1075 (PLTSNNTKNRTKSI). Residues 1091-1107 (EKNRSESPTSEKAEPTK) are compositionally biased toward basic and acidic residues. The span at 1108-1123 (KTSNISSLQNKLSLNP) shows a compositional bias: polar residues. Low complexity predominate over residues 1147-1162 (STNNDNDSSATDLSDS). Composition is skewed to polar residues over residues 1163 to 1174 (GRSSPSVTSPTL) and 1220 to 1236 (KSGTSAPNRSESPTPTQ). Ser-1249 carries the post-translational modification Phosphoserine. Residues 1277–1292 (EKTSSGKSSPSPTIKS) are compositionally biased toward low complexity. A compositionally biased stretch (polar residues) spans 1307–1317 (ASTTTKPTASE). Residues 1327 to 1358 (KKSEPETPKETPKETPKEKEQTKEKEQPKETP) are compositionally biased toward basic and acidic residues. Low complexity-rich tracts occupy residues 1419–1445 (TSTTSKSTTTTTTTTTTKAKSTKAVDN) and 1452–1466 (NTTTKATPTKATPSK).

This sequence belongs to the FAM21 family. In terms of assembly, probable component of the WASH complex.

This Dictyostelium discoideum (Social amoeba) protein is WASH complex subunit 2.